Consider the following 833-residue polypeptide: Leucine--tRNA ligase (833 aa).

The 'HIGH' region motif lies at 41–52; sequence PYPSGAGLHVGH. Residues 610 to 614 carry the 'KMSKS' region motif; it reads KMSKS. Lys613 lines the ATP pocket.

This sequence belongs to the class-I aminoacyl-tRNA synthetase family.

The protein localises to the cytoplasm. It catalyses the reaction tRNA(Leu) + L-leucine + ATP = L-leucyl-tRNA(Leu) + AMP + diphosphate. The polypeptide is Leucine--tRNA ligase (Streptococcus thermophilus (strain CNRZ 1066)).